We begin with the raw amino-acid sequence, 296 residues long: tRNA pseudouridine synthase B (296 aa).

Aspartate 38 functions as the Nucleophile in the catalytic mechanism.

Belongs to the pseudouridine synthase TruB family. Type 1 subfamily.

It catalyses the reaction uridine(55) in tRNA = pseudouridine(55) in tRNA. In terms of biological role, responsible for synthesis of pseudouridine from uracil-55 in the psi GC loop of transfer RNAs. The chain is tRNA pseudouridine synthase B from Ehrlichia ruminantium (strain Gardel).